The chain runs to 76 residues: Acyl carrier protein (76 aa).

The Carrier domain occupies 2–76; the sequence is SSIFDKVKAI…SAVEYIKENQ (75 aa). Ser36 is modified (O-(pantetheine 4'-phosphoryl)serine).

The protein belongs to the acyl carrier protein (ACP) family. 4'-phosphopantetheine is transferred from CoA to a specific serine of apo-ACP by AcpS. This modification is essential for activity because fatty acids are bound in thioester linkage to the sulfhydryl of the prosthetic group.

It is found in the cytoplasm. Its pathway is lipid metabolism; fatty acid biosynthesis. Its function is as follows. Carrier of the growing fatty acid chain in fatty acid biosynthesis. This Heliobacterium modesticaldum (strain ATCC 51547 / Ice1) protein is Acyl carrier protein.